Here is an 86-residue protein sequence, read N- to C-terminus: Exodeoxyribonuclease 7 small subunit (86 aa).

Residues 1–26 form a disordered region; the sequence is MQDELFETEKIPPKNTKNTKNAPKKS.

Belongs to the XseB family. In terms of assembly, heterooligomer composed of large and small subunits.

It is found in the cytoplasm. It carries out the reaction Exonucleolytic cleavage in either 5'- to 3'- or 3'- to 5'-direction to yield nucleoside 5'-phosphates.. Bidirectionally degrades single-stranded DNA into large acid-insoluble oligonucleotides, which are then degraded further into small acid-soluble oligonucleotides. The protein is Exodeoxyribonuclease 7 small subunit of Helicobacter pylori (strain ATCC 700392 / 26695) (Campylobacter pylori).